A 519-amino-acid polypeptide reads, in one-letter code: Amphoterin-induced protein 2 (519 aa).

The first 38 residues, Met-1–Gly-38, serve as a signal peptide directing secretion. The LRRNT domain maps to Met-39 to Arg-67. The Extracellular portion of the chain corresponds to Met-39–Thr-397. Disulfide bonds link Cys-40–Cys-46 and Cys-44–Cys-53. Asn-57 is a glycosylation site (N-linked (GlcNAc...) asparagine). LRR repeat units follow at residues Leu-68 to Val-89, Lys-93 to Thr-114, Asn-117 to Glu-138, Ala-141 to Gly-162, His-165 to Gly-186, and Asp-192 to Leu-213. Residue Asn-103 is glycosylated (N-linked (GlcNAc...) asparagine). The 57-residue stretch at Asn-227–Tyr-283 folds into the LRRCT domain. 2 disulfides stabilise this stretch: Cys-231-Cys-259 and Cys-233-Cys-281. 7 N-linked (GlcNAc...) asparagine glycosylation sites follow: Asn-280, Asn-287, Asn-344, Asn-372, Asn-380, Asn-383, and Asn-387. The region spanning Gly-288–Met-378 is the Ig-like C2-type domain. Cys-309 and Cys-362 are joined by a disulfide. A helical membrane pass occupies residues Ala-398–Leu-418. The Cytoplasmic portion of the chain corresponds to Thr-419–Thr-519. The disordered stretch occupies residues Arg-498–Thr-519.

The protein belongs to the immunoglobulin superfamily. AMIGO family. As to quaternary structure, binds itself as well as AMIGO1 and AMIGO3. In terms of tissue distribution, highest level in cerebellum, retina, liver, and lung. Lower levels in cerebrum, kidney, small intestine, spleen and testis.

The protein localises to the cell membrane. It is found in the nucleus. Its function is as follows. Required for depolarization-dependent survival of cultured cerebellar granule neurons. May mediate homophilic as well as heterophilic cell-cell interaction with AMIGO1 or AMIGO3. May contribute to signal transduction through its intracellular domain. The protein is Amphoterin-induced protein 2 of Mus musculus (Mouse).